Here is a 508-residue protein sequence, read N- to C-terminus: Protein O-glucosyltransferase 3 (508 aa).

A signal peptide spans 1-24; that stretch reads MLGVRRALLLPPLQLALLVAAGTG. The stretch at 25–134 is one Filamin repeat; sequence ARVSAPRSLA…VAQSPYILKG (110 aa). Asparagine 307 is a glycosylation site (N-linked (GlcNAc...) asparagine). The segment at 480–508 is disordered; it reads RDGMERVPQPDDSTSVRQCHRKRPEREEL. The Prevents secretion from ER signature appears at 505–508; it reads REEL.

Belongs to the KDELC family.

Its subcellular location is the endoplasmic reticulum lumen. It carries out the reaction L-seryl-[EGF-like domain protein] + UDP-alpha-D-glucose = 3-O-(beta-D-glucosyl)-L-seryl-[EGF-like domain protein] + UDP + H(+). The catalysed reaction is L-seryl-[EGF-like domain protein] + UDP-alpha-D-xylose = 3-O-(beta-D-xylosyl)-L-seryl-[EGF-like domain protein] + UDP + H(+). Its pathway is protein modification; protein glycosylation. Protein glucosyltransferase that catalyzes the transfer of glucose from UDP-glucose to a serine residue within the consensus sequence peptide C-X-N-T-X-G-S-F-X-C. Can also catalyze the transfer of xylose from UDP-xylose but less efficiently. Specifically targets extracellular EGF repeats of proteins such as NOTCH1, NOTCH3, FBN1, FBN2 and LTBP1. May regulate the transport of NOTCH1 and NOTCH3 to the plasma membrane and thereby the Notch signaling pathway. The protein is Protein O-glucosyltransferase 3 (Poglut3) of Rattus norvegicus (Rat).